The sequence spans 392 residues: ESX-1 secretion-associated protein EspA (392 aa).

Positions 302-392 (TRQALRPRAD…GQKVLVRNVV (91 aa)) are disordered. Positions 334 to 344 (QGMGGPVGMGG) are enriched in gly residues.

In terms of assembly, homodimer; disulfide-linked. An artificial EsxB-EsxA heterodimer interacts with EspA.

The protein resides in the secreted. Functionally, required for secretion of EsxA (ESAT-6) and EsxB (CFP-10) and for virulence. Involved in translocation of bacteria from the host (human) phagolysosome to the host cytoplasm. The polypeptide is ESX-1 secretion-associated protein EspA (Mycobacterium tuberculosis (strain ATCC 25618 / H37Rv)).